A 609-amino-acid polypeptide reads, in one-letter code: Albumin (609 aa).

The signal sequence occupies residues Met-1–Ser-18. A propeptide spanning residues Arg-19–Arg-24 is cleaved from the precursor. 3 Albumin domains span residues Arg-19–Arg-210, Asp-211–Pro-403, and Leu-404–Ala-601. His-27 serves as a coordination point for Cu cation. Residue Ser-29 is modified to Phosphoserine; by FAM20C. Ca(2+) is bound at residue Glu-30. Lys-36 carries N-linked (Glc) (glycation) lysine glycosylation. Asp-37 contributes to the Ca(2+) binding site. N-linked (Glc) (glycation) lysine; in vitro glycosylation is present at Lys-75. Cys-77 and Cys-86 are disulfide-bonded. Residues Ser-82 and Ser-89 each carry the phosphoserine; by FAM20C modification. Position 91 (His-91) interacts with Zn(2+). Intrachain disulfides connect Cys-99–Cys-115, Cys-114–Cys-125, Cys-148–Cys-193, and Cys-192–Cys-201. At Thr-107 the chain carries Phosphothreonine; by FAM20C. Residues Lys-161 and Lys-186 are each glycosylated (N-linked (Glc) (glycation) lysine; in vitro). The N-linked (Glc) (glycation) lysine; in vitro glycan is linked to Lys-223. 2 disulfide bridges follow: Cys-224–Cys-270 and Cys-269–Cys-277. At Lys-229 the chain carries N6-succinyllysine. N-linked (Glc) (glycation) lysine; in vitro glycosylation is present at Lys-249. Lys-257 carries an N-linked (Glc) (glycation) lysine glycan. (4Z,15Z)-bilirubin IXalpha is bound at residue Lys-264. Residue Glu-268 participates in Ca(2+) binding. Zn(2+)-binding residues include His-271 and Asp-273. Asp-273, Glu-276, Asp-279, and Asp-283 together coordinate Ca(2+). 2 disulfides stabilise this stretch: Cys-289–Cys-303 and Cys-302–Cys-313. Ser-297 is subject to Phosphoserine. An N-linked (Glc) (glycation) lysine; in vitro glycan is attached at Lys-300. N-linked (Glc) (glycation) lysine glycosylation occurs at Lys-305. An N-linked (Glc) (glycation) lysine; in vitro glycan is attached at Lys-337. 2 cysteine pairs are disulfide-bonded: Cys-340–Cys-385 and Cys-384–Cys-393. N-linked (Glc) (glycation) lysine glycosylation occurs at Lys-341. An N-linked (GlcNAc...) asparagine; in variant Redhill glycan is attached at Asn-342. Lys-347 is a glycosylation site (N-linked (Glc) (glycation) lysine; in vitro). Lys-375 carries an N-linked (Glc) (glycation) lysine glycan. N-linked (Glc) (glycation) lysine; in vitro glycosylation is found at Lys-402 and Lys-437. Disulfide bonds link Cys-416/Cys-462, Cys-461/Cys-472, Cys-485/Cys-501, and Cys-500/Cys-511. The residue at position 443 (Ser-443) is a Phosphoserine. Phosphothreonine is present on residues Thr-444 and Thr-446. Lys-460 is subject to N6-succinyllysine. An N-linked (Glc) (glycation) lysine glycan is attached at Lys-463. Residue Lys-468 is glycosylated (N-linked (Glc) (glycation) lysine; in vitro). A Phosphoserine modification is found at Ser-513. N-linked (GlcNAc...) asparagine; in variant Casebrook glycosylation occurs at Asp-518. Disulfide bonds link Cys-538/Cys-583 and Cys-582/Cys-591. The residue at position 543 (Lys-543) is an N6-succinyllysine. N-linked (Glc) (glycation) lysine glycosylation is present at Lys-549. Position 558 is an N6-methyllysine; alternate (Lys-558). N-linked (Glc) (glycation) lysine; alternate glycosylation is present at Lys-558. N-linked (Glc) (glycation) lysine; in vitro glycans are attached at residues Lys-560 and Lys-569. At Lys-588 the chain carries N6-succinyllysine. The N-linked (Glc) (glycation) lysine; in vitro glycan is linked to Lys-597.

Belongs to the ALB/AFP/VDB family. Interacts with FCGRT; this interaction regulates ALB homeostasis. Interacts with TASOR. In plasma, occurs in a covalently-linked complex with chromophore-bound alpha-1-microglobulin with molar ratio 1:2 and 1:1; this interaction does not prevent fatty acid binding to ALB. In terms of processing, kenitra variant is partially O-glycosylated at Thr-620. It has two new disulfide bonds Cys-600 to Cys-602 and Cys-601 to Cys-606. Post-translationally, glycated in diabetic patients. Phosphorylated by FAM20C in the extracellular medium. In terms of processing, acetylated on Lys-223 by acetylsalicylic acid. In terms of tissue distribution, plasma.

Its subcellular location is the secreted. In terms of biological role, binds water, Ca(2+), Na(+), K(+), fatty acids, hormones, bilirubin and drugs. Its main function is the regulation of the colloidal osmotic pressure of blood. Major zinc transporter in plasma, typically binds about 80% of all plasma zinc. Major calcium and magnesium transporter in plasma, binds approximately 45% of circulating calcium and magnesium in plasma. Potentially has more than two calcium-binding sites and might additionally bind calcium in a non-specific manner. The shared binding site between zinc and calcium at residue Asp-273 suggests a crosstalk between zinc and calcium transport in the blood. The rank order of affinity is zinc &gt; calcium &gt; magnesium. Binds to the bacterial siderophore enterobactin and inhibits enterobactin-mediated iron uptake of E.coli from ferric transferrin, and may thereby limit the utilization of iron and growth of enteric bacteria such as E.coli. Does not prevent iron uptake by the bacterial siderophore aerobactin. The polypeptide is Albumin (ALB) (Homo sapiens (Human)).